The chain runs to 118 residues: Large ribosomal subunit protein eL22 (118 aa).

This sequence belongs to the eukaryotic ribosomal protein eL22 family.

The chain is Large ribosomal subunit protein eL22 (RPL22) from Tetrahymena thermophila (strain SB210).